We begin with the raw amino-acid sequence, 385 residues long: Deoxyhypusine synthase (385 aa).

Residues 108–112 (SNLIS), 134–136 (TAG), E140, and D257 contribute to the NAD(+) site. 139–140 (EE) serves as a coordination point for spermidine. D262 lines the spermidine pocket. G304 contributes to the NAD(+) binding site. H309 serves as a coordination point for spermidine. 329-330 (TG) serves as a coordination point for NAD(+). Residues 335–337 (GSD) and 344–350 (EAVSWGK) each bind spermidine. Residue K350 is the Nucleophile of the active site. 363 to 364 (DV) is an NAD(+) binding site.

It belongs to the deoxyhypusine synthase family. NAD(+) is required as a cofactor.

The enzyme catalyses [eIF5A protein]-L-lysine + spermidine = [eIF5A protein]-deoxyhypusine + propane-1,3-diamine. The protein operates within protein modification; eIF5A hypusination. Functionally, catalyzes the NAD-dependent oxidative cleavage of spermidine and the subsequent transfer of the butylamine moiety of spermidine to the epsilon-amino group of a specific lysine residue of the eIF-5A precursor protein to form the intermediate deoxyhypusine residue. The protein is Deoxyhypusine synthase (DYS1) of Candida glabrata (strain ATCC 2001 / BCRC 20586 / JCM 3761 / NBRC 0622 / NRRL Y-65 / CBS 138) (Yeast).